The primary structure comprises 724 residues: Putative mediator of RNA polymerase II transcription subunit 1 (724 aa).

3 disordered regions span residues 33–52 (SQQQ…VTSN), 147–167 (QQQQ…PLVE), and 486–524 (HRSS…NENG). The stretch at 140–200 (YLNQQKEQQQ…QEMTNELNNK (61 aa)) forms a coiled coil. 2 stretches are compositionally biased toward low complexity: residues 147 to 164 (QQQQ…QPQP) and 488 to 510 (SSQQ…QQQQ). The span at 511-524 (KKLNSVDESMNENG) shows a compositional bias: polar residues.

The protein belongs to the Mediator complex subunit 1 family. Component of the Mediator complex.

Its subcellular location is the nucleus. Functionally, component of the Mediator complex, a coactivator involved in the regulated transcription of nearly all RNA polymerase II-dependent genes. Mediator functions as a bridge to convey information from gene-specific regulatory proteins to the basal RNA polymerase II transcription machinery. Mediator is recruited to promoters by direct interactions with regulatory proteins and serves as a scaffold for the assembly of a functional preinitiation complex with RNA polymerase II and the general transcription factors. This is Putative mediator of RNA polymerase II transcription subunit 1 (med1) from Dictyostelium discoideum (Social amoeba).